The primary structure comprises 45 residues: uncharacterized protein (45 aa).

This is an uncharacterized protein from Haemophilus influenzae (strain ATCC 51907 / DSM 11121 / KW20 / Rd).